A 288-amino-acid chain; its full sequence is Thymidylate synthase (288 aa).

R21 is a dUMP binding site. A (6R)-5,10-methylene-5,6,7,8-tetrahydrofolate-binding site is contributed by H51. Residue 150 to 151 (RR) coordinates dUMP. C170 functions as the Nucleophile in the catalytic mechanism. DUMP contacts are provided by residues 190–193 (RSGD), N201, and 231–233 (HIY). D193 contacts (6R)-5,10-methylene-5,6,7,8-tetrahydrofolate. A287 contributes to the (6R)-5,10-methylene-5,6,7,8-tetrahydrofolate binding site.

The protein belongs to the thymidylate synthase family. Bacterial-type ThyA subfamily. Homodimer.

Its subcellular location is the cytoplasm. The enzyme catalyses dUMP + (6R)-5,10-methylene-5,6,7,8-tetrahydrofolate = 7,8-dihydrofolate + dTMP. Its pathway is pyrimidine metabolism; dTTP biosynthesis. In terms of biological role, catalyzes the reductive methylation of 2'-deoxyuridine-5'-monophosphate (dUMP) to 2'-deoxythymidine-5'-monophosphate (dTMP) while utilizing 5,10-methylenetetrahydrofolate (mTHF) as the methyl donor and reductant in the reaction, yielding dihydrofolate (DHF) as a by-product. This enzymatic reaction provides an intracellular de novo source of dTMP, an essential precursor for DNA biosynthesis. The protein is Thymidylate synthase of Mycoplasma mobile (strain ATCC 43663 / 163K / NCTC 11711) (Mesomycoplasma mobile).